The primary structure comprises 103 residues: Small ribosomal subunit protein bS6c (103 aa).

This sequence belongs to the bacterial ribosomal protein bS6 family.

The protein resides in the plastid. It is found in the chloroplast. Functionally, binds together with bS18 to 16S ribosomal RNA. The polypeptide is Small ribosomal subunit protein bS6c (Gracilaria tenuistipitata var. liui (Red alga)).